Here is a 535-residue protein sequence, read N- to C-terminus: CTP synthase (535 aa).

An amidoligase domain region spans residues Met1–Leu267. Ser13 contributes to the CTP binding site. Ser13 contacts UTP. Residue Ser14–Ile19 participates in ATP binding. Tyr54 provides a ligand contact to L-glutamine. Position 71 (Asp71) interacts with ATP. Mg(2+) is bound by residues Asp71 and Glu141. CTP-binding positions include Asp148–Glu150, Lys188–Gln193, and Lys224. UTP is bound by residues Lys188–Gln193 and Lys224. The region spanning Thr292 to Leu534 is the Glutamine amidotransferase type-1 domain. Position 354 (Gly354) interacts with L-glutamine. Cys381 acts as the Nucleophile; for glutamine hydrolysis in catalysis. L-glutamine contacts are provided by residues Leu382–Gln385, Glu405, and Arg462. Catalysis depends on residues His507 and Glu509.

The protein belongs to the CTP synthase family. In terms of assembly, homotetramer.

The catalysed reaction is UTP + L-glutamine + ATP + H2O = CTP + L-glutamate + ADP + phosphate + 2 H(+). It catalyses the reaction L-glutamine + H2O = L-glutamate + NH4(+). The enzyme catalyses UTP + NH4(+) + ATP = CTP + ADP + phosphate + 2 H(+). It participates in pyrimidine metabolism; CTP biosynthesis via de novo pathway; CTP from UDP: step 2/2. Allosterically activated by GTP, when glutamine is the substrate; GTP has no effect on the reaction when ammonia is the substrate. The allosteric effector GTP functions by stabilizing the protein conformation that binds the tetrahedral intermediate(s) formed during glutamine hydrolysis. Inhibited by the product CTP, via allosteric rather than competitive inhibition. In terms of biological role, catalyzes the ATP-dependent amination of UTP to CTP with either L-glutamine or ammonia as the source of nitrogen. Regulates intracellular CTP levels through interactions with the four ribonucleotide triphosphates. The polypeptide is CTP synthase (Carboxydothermus hydrogenoformans (strain ATCC BAA-161 / DSM 6008 / Z-2901)).